The following is a 291-amino-acid chain: uncharacterized protein (291 aa).

In terms of domain architecture, HTH tetR-type spans 2 to 62 (KEKEKLIIET…SMLNYYYDKT (61 aa)). Positions 25-44 (SVQEIAKECKISKGAFYIYF) form a DNA-binding region, H-T-H motif.

This is an uncharacterized protein from Bacillus subtilis (strain 168).